The primary structure comprises 456 residues: RuvB-like helicase 1 (456 aa).

70-77 (GPPGTGKT) serves as a coordination point for ATP.

Belongs to the RuvB family. Forms homohexameric rings. May form a dodecamer with rept made of two stacked hexameric rings. Component of the chromatin remodeling Ino80 complex. Interacts with Myc and rept. As to expression, higher expression occurs in primordia of mesoderm, anterior and posterior midgut and cephalic furrow early in gastrulation, as well as in endoderm and mesoderm lineages during germ band extension. Later in development expression is only maintained in endoderm cells. Expressed in thoracic and abdominal segment neural precursors of all embryonic chordotonal organs.

The protein localises to the nucleus. The enzyme catalyses ATP + H2O = ADP + phosphate + H(+). Its function is as follows. Acts as a transcriptional coactivator in Wg signaling caused by altered arm signaling. Pont and rept interfere antagonistically with nuclear arm signaling function, and are required to enhance or reduce arm activity, respectively. Also an essential cofactor for the normal function of Myc; required for cellular proliferation and growth. Functionally, proposed core component of the chromatin remodeling Ino80 complex which is involved in transcriptional regulation, DNA replication and probably DNA repair. This chain is RuvB-like helicase 1, found in Drosophila melanogaster (Fruit fly).